A 292-amino-acid chain; its full sequence is Ribosomal RNA small subunit methyltransferase A (292 aa).

The S-adenosyl-L-methionine site is built by N29, L31, G56, E77, D102, and N127.

It belongs to the class I-like SAM-binding methyltransferase superfamily. rRNA adenine N(6)-methyltransferase family. RsmA subfamily.

The protein resides in the cytoplasm. It carries out the reaction adenosine(1518)/adenosine(1519) in 16S rRNA + 4 S-adenosyl-L-methionine = N(6)-dimethyladenosine(1518)/N(6)-dimethyladenosine(1519) in 16S rRNA + 4 S-adenosyl-L-homocysteine + 4 H(+). In terms of biological role, specifically dimethylates two adjacent adenosines (A1518 and A1519) in the loop of a conserved hairpin near the 3'-end of 16S rRNA in the 30S particle. May play a critical role in biogenesis of 30S subunits. This chain is Ribosomal RNA small subunit methyltransferase A, found in Bacillus pumilus (strain SAFR-032).